Reading from the N-terminus, the 270-residue chain is Carboxy-S-adenosyl-L-methionine synthase (270 aa).

S-adenosyl-L-methionine contacts are provided by residues tyrosine 65, 90–92 (GCS), 143–144 (DI), asparagine 158, and arginine 225.

The protein belongs to the class I-like SAM-binding methyltransferase superfamily. Cx-SAM synthase family. In terms of assembly, homodimer.

The catalysed reaction is prephenate + S-adenosyl-L-methionine = carboxy-S-adenosyl-L-methionine + 3-phenylpyruvate + H2O. Catalyzes the conversion of S-adenosyl-L-methionine (SAM) to carboxy-S-adenosyl-L-methionine (Cx-SAM). The polypeptide is Carboxy-S-adenosyl-L-methionine synthase (Chromohalobacter salexigens (strain ATCC BAA-138 / DSM 3043 / CIP 106854 / NCIMB 13768 / 1H11)).